The chain runs to 1496 residues: Synaptojanin-2 (1496 aa).

In terms of domain architecture, SAC spans 120–444 (LKKILSSGVF…GHGLSKVFTG (325 aa)). In terms of domain architecture, RRM spans 906–985 (DATVIVNLQS…RAVKIRPKTK (80 aa)). Disordered regions lie at residues 1047–1083 (VVSD…HPTY), 1100–1149 (GNFR…GTHG), 1205–1357 (VPES…LQVL), 1393–1413 (SSAI…AASF), 1442–1461 (EPLD…SAQV), and 1468–1496 (RGLP…TLGV). Residues 1063 to 1074 (SASTPASKSPAL) show a composition bias toward low complexity. Residues 1116–1130 (RPRPPHPPQRPPPPT) are compositionally biased toward pro residues. A Phosphoserine modification is found at S1139. The segment covering 1139–1149 (SDASISSGTHG) has biased composition (polar residues). Pro residues-rich tracts occupy residues 1230-1239 (PVLPRRPVPR) and 1279-1292 (TPPP…PVPK). The segment covering 1324-1338 (ELSSPEAPEAPSLAP) has biased composition (low complexity). Composition is skewed to basic and acidic residues over residues 1470 to 1480 (LPPDHGGKDFS) and 1487 to 1496 (NKDKRTTLGV).

The protein belongs to the synaptojanin family. In the central section; belongs to the inositol 1,4,5-trisphosphate 5-phosphatase family. Binds to GRB2. Isoform 2A binds to SYNJ2BP/OMP25. Widely expressed. Isoforms 2B1 and 2B2 are concentrated at nerve terminals in brain and at spermatid manchette in testis.

The protein localises to the cytoplasm. It localises to the cell membrane. Its subcellular location is the presynapse. The protein resides in the cytoskeleton. It is found in the membrane raft. The protein localises to the mitochondrion. It catalyses the reaction a 1,2-diacyl-sn-glycero-3-phospho-(1D-myo-inositol-4,5-bisphosphate) + H2O = a 1,2-diacyl-sn-glycero-3-phospho-(1D-myo-inositol 4-phosphate) + phosphate. Its function is as follows. Inositol 5-phosphatase which may be involved in distinct membrane trafficking and signal transduction pathways. May mediate the inhibitory effect of Rac1 on endocytosis. The protein is Synaptojanin-2 (Synj2) of Rattus norvegicus (Rat).